A 277-amino-acid polypeptide reads, in one-letter code: Protein OPG166 (277 aa).

N-linked (GlcNAc...) asparagine; by host glycosylation is found at asparagine 29 and asparagine 58. 5 helical membrane passes run 124–144 (TMLM…EIAY), 156–176 (GILQ…AFLF), 186–206 (IIGL…KVFS), 219–239 (LIIY…GLSL), and 247–267 (LLLS…LFLV).

The protein belongs to the orthopoxvirus OPG166 protein family.

The protein localises to the host membrane. In terms of biological role, promotes, when overexpressed, the influx of extracellular Ca(2+), leading to membrane permeability and host cell necrosis. The polypeptide is Protein OPG166 (OPG166) (Variola virus (isolate Human/India/Ind3/1967) (VARV)).